A 548-amino-acid polypeptide reads, in one-letter code: Membrane-associated tyrosine- and threonine-specific cdc2-inhibitory kinase (548 aa).

The tract at residues 61–89 (PNKQRSWSQPRPQSVSFRSPQNKTPASKL) is disordered. Residues 63 to 85 (KQRSWSQPRPQSVSFRSPQNKTP) are compositionally biased toward polar residues. The region spanning 103-353 (FKSICKLGRG…VDWLLSLPAI (251 aa)) is the Protein kinase domain. Residues 109 to 117 (LGRGSFGEV) and K132 each bind ATP. The active-site Proton acceptor is the D226. Residues N231, D244, and G246 each contribute to the Mg(2+) site. A Membrane-association motif motif is present at residues 376–392 (VYQFIVWLLSFVFQWLN). Residues 464-523 (SPDLLSRPSLGSTSTPRNLSPEFSMRKRSALPLTPNVSRISQDSTGKSRSPSTSHSSSGF) are disordered. Over residues 472 to 481 (SLGSTSTPRN) the composition is skewed to polar residues. At T478 the chain carries Phosphothreonine; by CDK1. Positions 507–521 (STGKSRSPSTSHSSS) are enriched in low complexity.

It belongs to the protein kinase superfamily. Ser/Thr protein kinase family. WEE1 subfamily. Interacts with CDC2-CCNB1 complex. Interacts with Mos during oocyte maturation. Autophosphorylated. Phosphorylated on undefined residues by RSK2 and Mos kinases. Phosphorylation at Thr-478 by cdk1 creates a docking site for plk1/plx1, leading to subsequent phosphorylation by plk1/plk1 and inhibition of the protein kinase activity kinase activity.

It is found in the endoplasmic reticulum membrane. It localises to the golgi apparatus membrane. It carries out the reaction L-seryl-[protein] + ATP = O-phospho-L-seryl-[protein] + ADP + H(+). The enzyme catalyses L-threonyl-[protein] + ATP = O-phospho-L-threonyl-[protein] + ADP + H(+). Its activity is regulated as follows. Negatively regulated by hyperphosphorylation during mitosis. The plk1/plk1 protein kinase may be required for mitotic phosphorylation. Inactivated during oocyte maturation by phosphorylation by RSK2 and Mos kinase. In terms of biological role, acts as a negative regulator of entry into mitosis (G2 to M transition) by phosphorylation of the CDK1 kinase specifically when CDK1 is complexed to cyclins. Mediates phosphorylation of CDK1 predominantly on 'Thr-14'. Also involved in Golgi fragmentation. May be involved in phosphorylation of CDK1 on 'Tyr-15' to a lesser degree, however tyrosine kinase activity is unclear and may be indirect. In Xenopus laevis (African clawed frog), this protein is Membrane-associated tyrosine- and threonine-specific cdc2-inhibitory kinase (pkmyt1).